A 408-amino-acid chain; its full sequence is Ribulose bisphosphate carboxylase/oxygenase activase, chloroplastic (408 aa).

Residues 1–32 (MQVTMKSSAVSGQRVGGARVATRSVRRAQLQV) constitute a chloroplast transit peptide. 138 to 145 (GGKGQGKT) is an ATP binding site.

Belongs to the RuBisCO activase family. Monomer.

It localises to the plastid. The protein resides in the chloroplast stroma. Activation of RuBisCO (ribulose-1,5-bisphosphate carboxylase/oxygenase; EC 4.1.1.39) involves the ATP-dependent carboxylation of the epsilon-amino group of lysine leading to a carbamate structure. This Chlamydomonas reinhardtii (Chlamydomonas smithii) protein is Ribulose bisphosphate carboxylase/oxygenase activase, chloroplastic.